The chain runs to 85 residues: COMM domain-containing protein 6 (85 aa).

Met1 is subject to N-acetylmethionine. A COMM domain is found at 18–85 (QLVDFQWKLG…KEIAAVIETV (68 aa)).

This sequence belongs to the COMM domain-containing protein 6 family. In terms of assembly, component of the commander complex consisting of the CCC subcomplex and the retriever subcomplex. Component of the CCC (COMMD/CCDC22/CCDC93) subcomplex consisting of COMMD1, COMMD2, COMMD3, COMMD4, COMMD5, COMMD6, COMMD7, COMMD8, COMMD9, COMMD10, CCDC22 and CCDC93; within the complex forms a heterodimer with COMMD1. May form a homodimer with isoform 1. Interacts with RELA, RELB, NFKB1/p105. Does not interact with NFKBIB. Interacts with CCDC22, CCDC93, SCNN1B, CUL4A. Ubiquitous. Expressed in brain, heart, skeletal muscle, lung, pancreas, liver, kidney, small intestine and placenta.

The protein resides in the nucleus. It is found in the cytoplasm. Functionally, scaffold protein in the commander complex that is essential for endosomal recycling of transmembrane cargos; the commander complex is composed of the CCC subcomplex and the retriever subcomplex. May modulate activity of cullin-RING E3 ubiquitin ligase (CRL) complexes. Down-regulates activation of NF-kappa-B. Inhibits TNF-induced NFKB1 activation. The polypeptide is COMM domain-containing protein 6 (COMMD6) (Homo sapiens (Human)).